The following is a 164-amino-acid chain: MENYQGQHGYGADRVDVYGNPVAGQYGGGATAPGGGHGVMGMGGHHAGAGGQFQPVKEEHKTGGILHRSGSSSSSSSSEDDGMGGRRKKGIKEKIKEKLPGGNKGNNHQQQQMMGNTGGAYGQQGHAGMTGAGTGTGVHGAEYGNTGEKKGFMDKIKEKLPGQH.

Positions 42–51 (MGGHHAGAGG) are enriched in gly residues. Residues 42 to 164 (MGGHHAGAGG…KIKEKLPGQH (123 aa)) are disordered. Residues 105-115 (GNNHQQQQMMG) show a composition bias toward low complexity. Residues 128–138 (GMTGAGTGTGV) are compositionally biased toward gly residues. A compositionally biased stretch (basic and acidic residues) spans 147 to 164 (GEKKGFMDKIKEKLPGQH).

The protein belongs to the plant dehydrin family.

The sequence is that of Dehydrin Rab16C (RAB16C) from Oryza sativa subsp. indica (Rice).